The primary structure comprises 266 residues: 22 kDa alpha-zein 14 (266 aa).

The first 21 residues, 1–21 (MATKILSLLALLALFASATNA), serve as a signal peptide directing secretion.

Belongs to the zein family.

Its function is as follows. Zeins are major seed storage proteins. The protein is 22 kDa alpha-zein 14 of Zea mays (Maize).